The chain runs to 295 residues: Trimeric intracellular cation channel type A (295 aa).

At 1–18 (MELLSALSLGELALSFSR) the chain is on the lumenal side. Residues 19–39 (VPLFPVFDLSYFIVSILYLKY) traverse the membrane as a helical segment. The Cytoplasmic segment spans residues 40-51 (EPGAVELSRRHP). A helical membrane pass occupies residues 52-72 (VASWLCAMLHCFGSYILADLL). Residues 73–85 (LGEPLIDYFSNNS) lie on the Lumenal side of the membrane. Residue glycine 74 participates in Ca(2+) binding. A helical transmembrane segment spans residues 86-106 (SILLASAVWYLIFFCPLDLFY). Residues 107 to 144 (KCVCFLPVKLIFVAMKEVVRVRKIAVGIHHAHHHYHHG) lie on the Cytoplasmic side of the membrane. Positions 122 and 126 each coordinate a 1,2-diacyl-sn-glycero-3-phospho-(1D-myo-inositol-4,5-bisphosphate). Residues 145–165 (WFIMIATGWVKGSGVALLSNV) traverse the membrane as a helical segment. Residues 166-178 (EQLLRGVWKPETN) are Lumenal-facing. A helical membrane pass occupies residues 179-199 (EILHMSFPTKASLYGAILFTL). At 200–209 (QQTRWLPVSK) the chain is on the cytoplasmic side. A helical membrane pass occupies residues 210-230 (ASLIFIFTMFMVSCKVFLTAT). Topologically, residues 231-234 (HSHS) are lumenal. A helical transmembrane segment spans residues 235–255 (SPFDVLEAYVCPVLFGTGSGG). Residues 256–295 (DHPQDNHGAWPGGPPSGALATKSKEELSEGSRKKKTKKAD) lie on the Cytoplasmic side of the membrane. The disordered stretch occupies residues 256 to 295 (DHPQDNHGAWPGGPPSGALATKSKEELSEGSRKKKTKKAD). The span at 277-286 (KSKEELSEGS) shows a compositional bias: basic and acidic residues.

Belongs to the TMEM38 family. Homotrimer; conformation seems to be controled by binding to diacylglycerol (DAG).

It is found in the sarcoplasmic reticulum membrane. The protein localises to the nucleus membrane. The catalysed reaction is K(+)(in) = K(+)(out). Its activity is regulated as follows. Channel activity is activated by a change of voltage within the sarcoplasmic reticulum lumen and blocked by luminal high Ca(2+) levels. In terms of biological role, intracellular monovalent cation channel required for maintenance of rapid intracellular calcium release. Acts as a potassium counter-ion channel that functions in synchronization with calcium release from intracellular stores. Opened by a change of voltage within the sarcoplasmic reticulum lumen. This is Trimeric intracellular cation channel type A from Oryctolagus cuniculus (Rabbit).